The chain runs to 383 residues: N-acetyldiaminopimelate deacetylase (383 aa).

Residue D72 is part of the active site. The active-site Proton acceptor is the E131.

This sequence belongs to the peptidase M20A family. N-acetyldiaminopimelate deacetylase subfamily.

The catalysed reaction is N-acetyl-(2S,6S)-2,6-diaminopimelate + H2O = (2S,6S)-2,6-diaminopimelate + acetate. It functions in the pathway amino-acid biosynthesis; L-lysine biosynthesis via DAP pathway; LL-2,6-diaminopimelate from (S)-tetrahydrodipicolinate (acetylase route): step 3/3. In terms of biological role, catalyzes the conversion of N-acetyl-diaminopimelate to diaminopimelate and acetate. The sequence is that of N-acetyldiaminopimelate deacetylase from Lacticaseibacillus casei (strain BL23) (Lactobacillus casei).